We begin with the raw amino-acid sequence, 412 residues long: Stachydrine N-demethylase (412 aa).

Residues 45–150 form the Rieske domain; it reads LYAVPVCQLA…LRNLDGLIYI (106 aa). 4 residues coordinate [2Fe-2S] cluster: Cys-86, His-88, Cys-106, and His-109. 3 residues coordinate Fe cation: His-204, His-209, and Asp-360.

This sequence belongs to the bacterial ring-hydroxylating dioxygenase alpha subunit family. In terms of assembly, homotrimer. The system is probably composed of an oxygenase subunit (Stc2) and two reductase subunits (Stc3 and Stc4). [2Fe-2S] cluster is required as a cofactor. Requires Fe cation as cofactor.

The enzyme catalyses L-proline betaine + NADH + O2 + H(+) = N-methyl-L-proline + formaldehyde + NAD(+) + H2O. The catalysed reaction is L-proline betaine + NADPH + O2 + H(+) = N-methyl-L-proline + formaldehyde + NADP(+) + H2O. Functionally, monooxygenase involved in the catabolism of stachydrine (L-proline betaine), a source of carbon and nitrogen. Part of a Rieske-type oxygenase system that catalyzes the demethylation of stachydrine to produce N-methyl-L-proline (monomethylproline). Stc2 is the catalytic subunit. The chain is Stachydrine N-demethylase from Rhizobium meliloti (strain 1021) (Ensifer meliloti).